Consider the following 358-residue polypeptide: Na(+)/H(+) exchange regulatory cofactor NHE-RF1 (358 aa).

Ser-2 bears the N-acetylserine mark. 2 positions are modified to phosphoserine: Ser-2 and Ser-46. In terms of domain architecture, PDZ 1 spans Leu-14–Glu-94. The segment covering Gln-114–Glu-134 has biased composition (low complexity). Disordered stretches follow at residues Gln-114–Gly-192 and Ser-269–Leu-358. The segment covering Asn-135 to Lys-149 has biased composition (basic and acidic residues). The PDZ 2 domain maps to Leu-154 to Glu-234. Phosphoserine occurs at positions 162, 269, 280, 290, and 291. Polar residues predominate over residues Arg-287 to Gln-306. Thr-293 bears the Phosphothreonine mark. 3 positions are modified to phosphoserine: Ser-294, Ser-299, and Ser-302. Over residues Asp-307–Pro-319 the composition is skewed to low complexity. The span at Trp-348–Leu-358 shows a compositional bias: basic and acidic residues.

In terms of assembly, homodimer, and heterodimer with NHERF2. Binds the N-termini of EZR, RDX and MSN. Binds the C-termini of PDGFRA, PDGFRB, ADRB2, NOS2 and CFTR. Binds ARHGAP17, EPI64, RACK1, OPRK1, GNAQ, CTNNB1 and PLCB3. Binds PDZK1. Interacts with CLCN3. Binds the C-terminus of PAG1. In resting T-cells, part of a PAG1-NHERF1-MSN complex which is disrupted upon TCR activation. Forms a complex with CFTR and SLC4A7. Forms a complex with SLC4A7 and ATP6V1B1. Interacts with TRPC4 (via the PDZ-binding domain). Directly interacts with HTR4. Interacts (via the PDZ 1 domain) with PODXL (via the C-terminal PDZ-binding motif DTHL); interaction is not detected in glomerular epithelium cells. Interacts (via the PDZ 1 domain) with PODXL (via the C-terminal PDZ-binding motif DTHL); the interaction take place early in the secretory pathway and is necessary for its apical membrane sorting. Interacts with SLC26A3. Interacts with MCC. Interacts with SLC34A1. Interacts (via the PDZ domains) with SLC26A6 isoform 4 and isoform 5. Interacts (via PDZ domains) with ACE2 (via PDZ-binding motif); the interaction may enhance ACE2 membrane residence. In terms of processing, phosphorylated on serine residues.

Its subcellular location is the cytoplasm. It is found in the apical cell membrane. The protein localises to the endomembrane system. The protein resides in the cell projection. It localises to the filopodium. Its subcellular location is the ruffle. It is found in the microvillus. Its function is as follows. Scaffold protein that connects plasma membrane proteins with members of the ezrin/moesin/radixin family and thereby helps to link them to the actin cytoskeleton and to regulate their surface expression. Necessary for recycling of internalized ADRB2. Was first known to play a role in the regulation of the activity and subcellular location of SLC9A3. Necessary for cAMP-mediated phosphorylation and inhibition of SLC9A3. Involved in sperm capacitation. May participate in the regulation of the chloride and bicarbonate homeostasis in spermatozoa. May enhance Wnt signaling. May participate in HTR4 targeting to microvilli. Involved in the regulation of phosphate reabsorption in the renal proximal tubules. In Macaca fascicularis (Crab-eating macaque), this protein is Na(+)/H(+) exchange regulatory cofactor NHE-RF1 (NHERF1).